Consider the following 288-residue polypeptide: Disulfide-bond oxidoreductase YghU (288 aa).

Residues asparagine 26, 52–54 (TPN), glutamine 87, isoleucine 101, 117–118 (ES), glutamine 151, and arginine 178 each bind glutathione. A GST N-terminal domain is found at 46 to 133 (QLYSLGTPNG…YLAEKFGYFL (88 aa)). A GST C-terminal domain is found at 139–265 (KRTETMNWLF…RIVNRTNGPL (127 aa)). A disordered region spans residues 260–288 (RTNGPLNEQLHERHDASDFETNTEDKRQG). Over residues 268 to 288 (QLHERHDASDFETNTEDKRQG) the composition is skewed to basic and acidic residues.

This sequence belongs to the GST superfamily. Nu-class GSH transferase family. Homodimer.

In terms of biological role, exhibits a robust glutathione (GSH)-dependent disulfide-bond reductase activity toward the model substrate, 2-hydroxyethyl disulfide; the actual physiological substrates are not known. Also displays a modest GSH-dependent peroxidase activity toward several organic hydroperoxides, such as cumene hydroperoxide and linoleic acid 13(S)-hydroperoxide, but does not reduce H(2)O(2) or tert-butyl hydroperoxide at appreciable rates. Exhibits little or no GSH transferase activity with most typical electrophilic substrates, and has no detectable transferase activity toward 1-chloro-2,4-dinitrobenzene (CDNB) with glutathionylspermidine (GspSH) as the nucleophilic substrate. The polypeptide is Disulfide-bond oxidoreductase YghU (yghU) (Escherichia coli (strain K12)).